The chain runs to 399 residues: Myb-related transcription factor, partner of profilin (399 aa).

A Myb-like domain is found at 12-84; the sequence is TTRLRKPRFS…EVQKRWNDFK (73 aa). The Nuclear localization signal motif lies at 83-86; sequence FKRR. Disordered regions lie at residues 87–108, 127–261, 297–332, and 358–399; these read TKEK…AEDA, PGAG…PSLD, LLPG…PKVE, and APRS…WKSP. Low complexity predominate over residues 127–136; sequence PGAGAGAEEP. Residues 137 to 149 show a composition bias toward pro residues; sequence PAAPSSQPPPPSA. Basic and acidic residues predominate over residues 156 to 170; it reads LSEDRREDRRADTSA. Pro residues-rich tracts occupy residues 219–252, 305–329, and 366–377; these read SPPP…PPPT, SLPP…PPAP, and PRPPPAPLPPHD. Positions 381 to 399 are enriched in basic residues; it reads HKRRKGFPTRKRRGRWKSP. Short sequence motifs (nuclear localization signal) lie at residues 382 to 385 and 390 to 393; these read KRRK and RKRR.

As to quaternary structure, interacts with PFN1. Homodimer and heterodimer with PFN1.

It is found in the nucleus. Its function is as follows. Transcriptional repressor; DNA-binding protein that specifically recognizes the core sequence 5'-YAAC[GT]G-3'. Dimerization with PFN1 reduces its DNA-binding capacity. This chain is Myb-related transcription factor, partner of profilin (MYPOP), found in Homo sapiens (Human).